Consider the following 141-residue polypeptide: Large ribosomal subunit protein uL11 (141 aa).

The protein belongs to the universal ribosomal protein uL11 family. Part of the ribosomal stalk of the 50S ribosomal subunit. Interacts with L10 and the large rRNA to form the base of the stalk. L10 forms an elongated spine to which L12 dimers bind in a sequential fashion forming a multimeric L10(L12)X complex. In terms of processing, one or more lysine residues are methylated.

Forms part of the ribosomal stalk which helps the ribosome interact with GTP-bound translation factors. This is Large ribosomal subunit protein uL11 from Pediococcus pentosaceus (strain ATCC 25745 / CCUG 21536 / LMG 10740 / 183-1w).